Here is a 406-residue protein sequence, read N- to C-terminus: Bifunctional enzyme IspD/IspF (406 aa).

The tract at residues M1–T247 is 2-C-methyl-D-erythritol 4-phosphate cytidylyltransferase. A 2-C-methyl-D-erythritol 2,4-cyclodiphosphate synthase region spans residues F248–L406. Positions 254 and 256 each coordinate a divalent metal cation. 4-CDP-2-C-methyl-D-erythritol 2-phosphate is bound by residues D254–H256 and H280–S281. H288 is a binding site for a divalent metal cation. Residues D302–G304, F307–D311, T378–E381, F385, and K388 contribute to the 4-CDP-2-C-methyl-D-erythritol 2-phosphate site.

It in the N-terminal section; belongs to the IspD/TarI cytidylyltransferase family. IspD subfamily. This sequence in the C-terminal section; belongs to the IspF family. It depends on a divalent metal cation as a cofactor.

It catalyses the reaction 2-C-methyl-D-erythritol 4-phosphate + CTP + H(+) = 4-CDP-2-C-methyl-D-erythritol + diphosphate. It carries out the reaction 4-CDP-2-C-methyl-D-erythritol 2-phosphate = 2-C-methyl-D-erythritol 2,4-cyclic diphosphate + CMP. It participates in isoprenoid biosynthesis; isopentenyl diphosphate biosynthesis via DXP pathway; isopentenyl diphosphate from 1-deoxy-D-xylulose 5-phosphate: step 2/6. It functions in the pathway isoprenoid biosynthesis; isopentenyl diphosphate biosynthesis via DXP pathway; isopentenyl diphosphate from 1-deoxy-D-xylulose 5-phosphate: step 4/6. Its function is as follows. Bifunctional enzyme that catalyzes the formation of 4-diphosphocytidyl-2-C-methyl-D-erythritol from CTP and 2-C-methyl-D-erythritol 4-phosphate (MEP) (IspD), and catalyzes the conversion of 4-diphosphocytidyl-2-C-methyl-D-erythritol 2-phosphate (CDP-ME2P) to 2-C-methyl-D-erythritol 2,4-cyclodiphosphate (ME-CPP) with a corresponding release of cytidine 5-monophosphate (CMP) (IspF). The protein is Bifunctional enzyme IspD/IspF of Helicobacter pylori (strain ATCC 700392 / 26695) (Campylobacter pylori).